The chain runs to 302 residues: Nudix hydrolase 22, chloroplastic (302 aa).

The transit peptide at 1 to 25 directs the protein to the chloroplast; sequence MKSGASAASPTAKSFNFGSSRLLAL. The Nudix hydrolase domain maps to 73–229; it reads PKKAAVLICL…DSDYVIWGLT (157 aa). Positions 114–135 match the Nudix box motif; sequence KAEEHDKDDGITATREAEEEIG. The Mg(2+) site is built by Glu129 and Glu133.

Belongs to the Nudix hydrolase family. It depends on Mg(2+) as a cofactor. Mn(2+) is required as a cofactor. As to expression, expressed in roots, leaves, stems and inflorescences.

The protein localises to the plastid. It is found in the chloroplast. Its function is as follows. Probably mediates the hydrolysis of some nucleoside diphosphate derivatives. This chain is Nudix hydrolase 22, chloroplastic (NUDT22), found in Arabidopsis thaliana (Mouse-ear cress).